The primary structure comprises 152 residues: Methylglyoxal synthase (152 aa).

The 147-residue stretch at 6–152 (RKISARKSIA…YDGYLAERLA (147 aa)) folds into the MGS-like domain. Substrate-binding positions include His19, Lys23, 45 to 48 (TGTT), and 65 to 66 (SG). Catalysis depends on Asp71, which acts as the Proton donor/acceptor. Residue His98 participates in substrate binding.

It belongs to the methylglyoxal synthase family.

The enzyme catalyses dihydroxyacetone phosphate = methylglyoxal + phosphate. Catalyzes the formation of methylglyoxal from dihydroxyacetone phosphate. In Actinobacillus pleuropneumoniae serotype 3 (strain JL03), this protein is Methylglyoxal synthase.